The chain runs to 456 residues: Exodeoxyribonuclease 7 large subunit (456 aa).

Belongs to the XseA family. Heterooligomer composed of large and small subunits.

The protein resides in the cytoplasm. The catalysed reaction is Exonucleolytic cleavage in either 5'- to 3'- or 3'- to 5'-direction to yield nucleoside 5'-phosphates.. Functionally, bidirectionally degrades single-stranded DNA into large acid-insoluble oligonucleotides, which are then degraded further into small acid-soluble oligonucleotides. The chain is Exodeoxyribonuclease 7 large subunit from Shigella boydii serotype 4 (strain Sb227).